The following is a 476-amino-acid chain: ATP synthase subunit beta (476 aa).

Position 153–160 (153–160 (GGAGVGKT)) interacts with ATP.

It belongs to the ATPase alpha/beta chains family. F-type ATPases have 2 components, CF(1) - the catalytic core - and CF(0) - the membrane proton channel. CF(1) has five subunits: alpha(3), beta(3), gamma(1), delta(1), epsilon(1). CF(0) has three main subunits: a(1), b(2) and c(9-12). The alpha and beta chains form an alternating ring which encloses part of the gamma chain. CF(1) is attached to CF(0) by a central stalk formed by the gamma and epsilon chains, while a peripheral stalk is formed by the delta and b chains.

The protein resides in the cell membrane. The catalysed reaction is ATP + H2O + 4 H(+)(in) = ADP + phosphate + 5 H(+)(out). Functionally, produces ATP from ADP in the presence of a proton gradient across the membrane. The catalytic sites are hosted primarily by the beta subunits. The protein is ATP synthase subunit beta of Latilactobacillus sakei subsp. sakei (strain 23K) (Lactobacillus sakei subsp. sakei).